Here is a 555-residue protein sequence, read N- to C-terminus: Phosphoglucomutase (555 aa).

Substrate-binding positions include Thr-45, Arg-49, 148–149 (SH), and Lys-158. Ser-148 acts as the Phosphoserine intermediate in catalysis. Ser-148 serves as a coordination point for Mg(2+). Residues Asp-306, Asp-308, and Asp-310 each contribute to the Mg(2+) site. Substrate contacts are provided by residues 310–311 (DR) and 393–395 (EES).

This sequence belongs to the phosphohexose mutase family. Requires Mg(2+) as cofactor.

It catalyses the reaction alpha-D-glucose 1-phosphate = alpha-D-glucose 6-phosphate. This enzyme participates in both the breakdown and synthesis of glucose. The sequence is that of Phosphoglucomutase (celB) from Komagataeibacter xylinus (Gluconacetobacter xylinus).